A 280-amino-acid polypeptide reads, in one-letter code: Ribosomal RNA small subunit methyltransferase A (280 aa).

6 residues coordinate S-adenosyl-L-methionine: N18, L20, G45, E66, D89, and N110.

It belongs to the class I-like SAM-binding methyltransferase superfamily. rRNA adenine N(6)-methyltransferase family. RsmA subfamily.

It is found in the cytoplasm. The catalysed reaction is adenosine(1518)/adenosine(1519) in 16S rRNA + 4 S-adenosyl-L-methionine = N(6)-dimethyladenosine(1518)/N(6)-dimethyladenosine(1519) in 16S rRNA + 4 S-adenosyl-L-homocysteine + 4 H(+). Its function is as follows. Specifically dimethylates two adjacent adenosines (A1518 and A1519) in the loop of a conserved hairpin near the 3'-end of 16S rRNA in the 30S particle. May play a critical role in biogenesis of 30S subunits. The protein is Ribosomal RNA small subunit methyltransferase A of Cupriavidus necator (strain ATCC 17699 / DSM 428 / KCTC 22496 / NCIMB 10442 / H16 / Stanier 337) (Ralstonia eutropha).